The chain runs to 208 residues: Ion-translocating oxidoreductase complex subunit G (208 aa).

Residues 9–29 traverse the membrane as a helical segment; the sequence is GVTLAVFAALTTGLTAMVNAL. T174 bears the FMN phosphoryl threonine mark.

This sequence belongs to the RnfG family. In terms of assembly, the complex is composed of six subunits: RnfA, RnfB, RnfC, RnfD, RnfE and RnfG. Requires FMN as cofactor.

The protein resides in the cell inner membrane. Part of a membrane-bound complex that couples electron transfer with translocation of ions across the membrane. This Cronobacter sakazakii (strain ATCC BAA-894) (Enterobacter sakazakii) protein is Ion-translocating oxidoreductase complex subunit G.